We begin with the raw amino-acid sequence, 338 residues long: 1-aminocyclopropane-1-carboxylate deaminase (338 aa).

Lysine 51 bears the N6-(pyridoxal phosphate)lysine mark. The active-site Nucleophile is the serine 78.

The protein belongs to the ACC deaminase/D-cysteine desulfhydrase family. In terms of assembly, homotrimer. Requires pyridoxal 5'-phosphate as cofactor.

It carries out the reaction 1-aminocyclopropane-1-carboxylate + H2O = 2-oxobutanoate + NH4(+). Functionally, catalyzes a cyclopropane ring-opening reaction, the irreversible conversion of 1-aminocyclopropane-1-carboxylate (ACC) to ammonia and alpha-ketobutyrate. Allows growth on ACC as a nitrogen source. This Burkholderia cenocepacia (strain HI2424) protein is 1-aminocyclopropane-1-carboxylate deaminase.